The sequence spans 327 residues: Undecaprenyl-phosphate 4-deoxy-4-formamido-L-arabinose transferase (327 aa).

Transmembrane regions (helical) follow at residues 235–255 and 270–290; these read LLSLVGSAIALLGFTFSVLLV and VFTLFAVLFMFIGAQFVGMGL.

The protein belongs to the glycosyltransferase 2 family.

The protein resides in the cell inner membrane. It carries out the reaction UDP-4-deoxy-4-formamido-beta-L-arabinose + di-trans,octa-cis-undecaprenyl phosphate = 4-deoxy-4-formamido-alpha-L-arabinopyranosyl di-trans,octa-cis-undecaprenyl phosphate + UDP. Its pathway is glycolipid biosynthesis; 4-amino-4-deoxy-alpha-L-arabinose undecaprenyl phosphate biosynthesis; 4-amino-4-deoxy-alpha-L-arabinose undecaprenyl phosphate from UDP-4-deoxy-4-formamido-beta-L-arabinose and undecaprenyl phosphate: step 1/2. The protein operates within bacterial outer membrane biogenesis; lipopolysaccharide biosynthesis. In terms of biological role, catalyzes the transfer of 4-deoxy-4-formamido-L-arabinose from UDP to undecaprenyl phosphate. The modified arabinose is attached to lipid A and is required for resistance to polymyxin and cationic antimicrobial peptides. In Yersinia pseudotuberculosis serotype IB (strain PB1/+), this protein is Undecaprenyl-phosphate 4-deoxy-4-formamido-L-arabinose transferase.